The following is a 432-amino-acid chain: Transcription factor E2F1 (432 aa).

2 disordered regions span residues 39–85 and 98–126; these read DVGA…GRPP and YLAGSSGPFRGRGRHPGKGVKSPGEKSRY. The tract at residues 65–106 is cyclin A:CDK2 binding; that stretch reads ATPQAPRPAPSAPRPALGRPPVKRRLDLETDHQYLAGSSGPF. Residues 87–189 form an interaction with BIRC2/c-IAP1 region; that stretch reads KRRLDLETDH…KKSKNHIQWL (103 aa). Residues 108-192 mediate DNA binding; that stretch reads GRGRHPGKGV…KNHIQWLGSR (85 aa). N6-acetyllysine is present on residues Lys115, Lys118, and Lys123. The interval 151 to 172 is leucine-zipper; it reads LNWAAEVLKVQKRRIYDITNVL. The DEF box motif lies at 156–192; that stretch reads EVLKVQKRRIYDITNVLEGIQLIAKKSKNHIQWLGSR. Lys183 carries the post-translational modification N6-methyllysine; by SETD7. A required for interaction with TRIM28 region spans residues 190–377; sequence GSRTMVGIGQ…RLSPLVAADS (188 aa). Residues 193–282 are dimerization; that stretch reads TMVGIGQRLE…AVDSAETFQI (90 aa). Residues 297-342 are disordered; that stretch reads PEESAEGISPGRTSYQETSGEDRNADSGTAGPPPSPPSTSPTLDPS. The interval 363 to 432 is transactivation; the sequence is PMEEDRLSPL…DFGDLTPLDF (70 aa). Residues Ser370 and Ser398 each carry the phosphoserine modification. The segment at 404-421 is RB1 binding; sequence VDYHFGLEEGEGIRDLFD. Position 428 is a phosphothreonine (Thr428).

The protein belongs to the E2F/DP family. In terms of assembly, component of the DRTF1/E2F transcription factor complex. Forms heterodimers with DP family members. The E2F1 complex binds specifically hypophosphorylated RB1, the interaction represses E2F1-driven transcription. During the cell cycle, RB1 becomes phosphorylated in mid-to-late G1 phase, detaches from the DRTF1/E2F complex, rendering E2F transcriptionally active. Interacts with TRRAP, which probably mediates its interaction with histone acetyltransferase complexes, leading to transcription activation. Binds TOPBP1 and EAPP. Interacts with ARID3A. Interacts with TRIM28; the interaction inhibits E2F1 acetylation through recruiting HDAC1 and represses its transcriptional activity. Interaction with KAT2B; the interaction acetylates E2F1 enhancing its DNA-binding and transcriptional activity. Interacts with BIRC2/c-IAP1 (via BIR domains). The complex TFDP1:E2F1 interacts with CEBPA; the interaction prevents CEBPA binding to target genes promoters and represses its transcriptional activity. Interacts with RRP1B. Interacts with HCFC1. Interacts with KMT2E; the interaction is probably indirect and is mediated via HCFC1. Interacts with DCAF5 and L3MBTL3; the interaction requires methylation at Lys-183 and is necessary to target E2F1 for ubiquitination by the CRL4-DCAF5 E3 ubiquitin ligase complex. Phosphorylated by CDK2 and cyclin A-CDK2 in the S-phase. Phosphorylation by CHEK2 stabilizes E2F1 upon DNA damage and regulates its effect on transcription and apoptosis. Phosphorylation at Ser-398 by GSK3B promotes interaction with USP11, leading to its deubiquitination and stabilization. In terms of processing, ubiquitinated via 'Lys-63'-linked ubiquitin, leading to its degradation. Deubiquitinated by USP11 following phosphorylation by GSK3B, promoting its stability. Post-translationally, acetylation stimulates DNA-binding. Enhanced under stress conditions such as DNA damage and inhibited by retinoblastoma protein RB1. Regulated by KAP1/TRIM28 which recruits HDAC1 to E2F1 resulting in deacetylation. Methylation at Lys-183 by SETD7 promotes E2F1 ubiquitin-dependent proteasomal degradation.

Its subcellular location is the nucleus. Its activity is regulated as follows. BIRC2/c-IAP1 stimulates its transcriptional activity. Its function is as follows. Transcription activator that binds DNA cooperatively with DP proteins through the E2 recognition site, 5'-TTTC[CG]CGC-3' found in the promoter region of a number of genes whose products are involved in cell cycle regulation or in DNA replication. The DRTF1/E2F complex functions in the control of cell-cycle progression from G1 to S phase. E2F1 binds preferentially RB1 in a cell-cycle dependent manner. It can mediate both cell proliferation and TP53/p53-dependent apoptosis. Blocks adipocyte differentiation by binding to specific promoters repressing CEBPA binding to its target gene promoters. Directly activates transcription of PEG10. Positively regulates transcription of RRP1B. This chain is Transcription factor E2F1, found in Rattus norvegicus (Rat).